Reading from the N-terminus, the 118-residue chain is MSSKNKIIQELENEQLKQELPEFSPGDTVVVQVKVTEGNRERLQAYEGVVIGIRNRGLNSAFTVRKISHGVGVERTFQTHSKQVESITVKRRGDVRQAKLYYLRELTGKAARIKEKLN.

The protein belongs to the bacterial ribosomal protein bL19 family.

Functionally, this protein is located at the 30S-50S ribosomal subunit interface and may play a role in the structure and function of the aminoacyl-tRNA binding site. In Teredinibacter turnerae (strain ATCC 39867 / T7901), this protein is Large ribosomal subunit protein bL19.